We begin with the raw amino-acid sequence, 299 residues long: ATP phosphoribosyltransferase (299 aa).

It belongs to the ATP phosphoribosyltransferase family. Long subfamily. Equilibrium between an active dimeric form, an inactive hexameric form and higher aggregates. Interconversion between the various forms is largely reversible and is influenced by the natural substrates and inhibitors of the enzyme. The cofactor is Mg(2+).

It localises to the cytoplasm. The enzyme catalyses 1-(5-phospho-beta-D-ribosyl)-ATP + diphosphate = 5-phospho-alpha-D-ribose 1-diphosphate + ATP. It participates in amino-acid biosynthesis; L-histidine biosynthesis; L-histidine from 5-phospho-alpha-D-ribose 1-diphosphate: step 1/9. Its activity is regulated as follows. Feedback inhibited by histidine. Catalyzes the condensation of ATP and 5-phosphoribose 1-diphosphate to form N'-(5'-phosphoribosyl)-ATP (PR-ATP). Has a crucial role in the pathway because the rate of histidine biosynthesis seems to be controlled primarily by regulation of HisG enzymatic activity. This chain is ATP phosphoribosyltransferase, found in Salmonella dublin (strain CT_02021853).